The following is a 529-amino-acid chain: Bifunctional purine biosynthesis protein PurH (529 aa).

The MGS-like domain occupies 1–148; it reads MQQRRPIRRA…KNHKDVAIVV (148 aa).

It belongs to the PurH family.

It carries out the reaction (6R)-10-formyltetrahydrofolate + 5-amino-1-(5-phospho-beta-D-ribosyl)imidazole-4-carboxamide = 5-formamido-1-(5-phospho-D-ribosyl)imidazole-4-carboxamide + (6S)-5,6,7,8-tetrahydrofolate. It catalyses the reaction IMP + H2O = 5-formamido-1-(5-phospho-D-ribosyl)imidazole-4-carboxamide. It functions in the pathway purine metabolism; IMP biosynthesis via de novo pathway; 5-formamido-1-(5-phospho-D-ribosyl)imidazole-4-carboxamide from 5-amino-1-(5-phospho-D-ribosyl)imidazole-4-carboxamide (10-formyl THF route): step 1/1. Its pathway is purine metabolism; IMP biosynthesis via de novo pathway; IMP from 5-formamido-1-(5-phospho-D-ribosyl)imidazole-4-carboxamide: step 1/1. The chain is Bifunctional purine biosynthesis protein PurH from Pectobacterium atrosepticum (strain SCRI 1043 / ATCC BAA-672) (Erwinia carotovora subsp. atroseptica).